Here is a 345-residue protein sequence, read N- to C-terminus: Phenylalanine--tRNA ligase alpha subunit (345 aa).

Glutamate 259 provides a ligand contact to Mg(2+).

The protein belongs to the class-II aminoacyl-tRNA synthetase family. Phe-tRNA synthetase alpha subunit type 1 subfamily. In terms of assembly, tetramer of two alpha and two beta subunits. The cofactor is Mg(2+).

Its subcellular location is the cytoplasm. The catalysed reaction is tRNA(Phe) + L-phenylalanine + ATP = L-phenylalanyl-tRNA(Phe) + AMP + diphosphate + H(+). The protein is Phenylalanine--tRNA ligase alpha subunit of Nitrosomonas europaea (strain ATCC 19718 / CIP 103999 / KCTC 2705 / NBRC 14298).